A 404-amino-acid polypeptide reads, in one-letter code: MERDLESAPPSAPRPPLGPPLSSSIGLALLLLLLALLFWLYIVMSDWTGGALLVLYSFALMLIIIILIIFIFRRDLLCPLGGLGLLLLMITLLLIALWNLHGQALYLGIVLFIFGCLLVFGIWIYFLEILWRLGATLWQLLAFILAFFLAIILLIIALYLQQNWWTLLVDLLWLLLFMAILIWMYYHGPRHTDEHHHDDSLPHPQQATDDSSHESDSNSNEGRHHLLVSGAGDGPPLCSQNLGAPGGGPDNGPQDPDNTDDNGPQDPDNTDDNGPQDPDNTDDNGPQDPDNTDDNGPQDPDNTDDNGPQDPDNTDDNGPQDPDNTDDNGPHDPLPHSPSDSAGNDGGPPNLTEEVANKGGDRGPPSMTDGGGGDPHLPTLLLGTSGSGGDDDDPHGPVQLSYYD.

The Cytoplasmic segment spans residues 1-23; it reads MERDLESAPPSAPRPPLGPPLSS. The helical transmembrane segment at 24 to 44 threads the bilayer; sequence SIGLALLLLLLALLFWLYIVM. Over 45-51 the chain is Extracellular; sequence SDWTGGA. A helical transmembrane segment spans residues 52 to 72; the sequence is LLVLYSFALMLIIIILIIFIF. The Cytoplasmic portion of the chain corresponds to 73–75; the sequence is RRD. A helical membrane pass occupies residues 76–96; sequence LLCPLGGLGLLLLMITLLLIA. Residues 97–106 are Extracellular-facing; sequence LWNLHGQALY. A helical transmembrane segment spans residues 107–127; it reads LGIVLFIFGCLLVFGIWIYFL. Residues 128 to 139 are Cytoplasmic-facing; that stretch reads EILWRLGATLWQ. The helical transmembrane segment at 140 to 160 threads the bilayer; the sequence is LLAFILAFFLAIILLIIALYL. At 161–163 the chain is on the extracellular side; the sequence is QQN. The helical transmembrane segment at 164–184 threads the bilayer; the sequence is WWTLLVDLLWLLLFMAILIWM. Topologically, residues 185-404 are cytoplasmic; that stretch reads YYHGPRHTDE…HGPVQLSYYD (220 aa). The tract at residues 194–232 is CTAR1; that stretch reads EHHHDDSLPHPQQATDDSSHESDSNSNEGRHHLLVSGAG. A disordered region spans residues 194-404; that stretch reads EHHHDDSLPH…HGPVQLSYYD (211 aa). The Interaction with host TRAF proteins signature appears at 204–208; sequence PQQAT. A compositionally biased stretch (basic and acidic residues) spans 210 to 224; that stretch reads DSSHESDSNSNEGRH. Composition is skewed to low complexity over residues 251 to 322 and 375 to 384; these read NGPQ…PQDP and PHLPTLLLGT. Residues 370–404 are CTAR2; that stretch reads GGGGDPHLPTLLLGTSGSGGDDDDPHGPVQLSYYD.

Belongs to the herpesviridae LMP-1 family. Interacts (via PXQXT motif) with host tumor necrosis factor receptor-associated factor (TRAF) proteins TRAF1, TRAF2, TRAF3 and TRAF5. Interacts with human protein ZMYND11; leading to negatively regulate NF-kappa-B activation. Interacts with host UBE2I; this interaction induces the sumoylation of various cellular proteins. Interacts with host IRF7. Interacts with host TYK2. Ubiquitinated on the N-terminus.

The protein localises to the host cell membrane. Acts as a CD40 functional homolog to prevent apoptosis of infected B-lymphocytes and drive their proliferation. Functions as a constitutively active tumor necrosis factor receptor that induces the activation of several signaling pathways, including those of the NF-kappa-B family. LMP1 signaling leads to up-regulation of antiapoptotic proteins and provide growth signals in latently infected cells. Interacts with host UBE2I and subsequently affects the sumoylation state of several cellular proteins. For example, induces the sumoylation of host IRF7 thereby limiting its transcriptional activity and modulating the activation of innate immune responses. Also inhibits host IFN-alpha-stimulated STAT2 nuclear translocation and interferon-stimulated response element transcriptional activity by interacting with and inhibiting host TYK2. Induces SUMO expression during viral latency thereby dysregulating the host sumoylation processes. The sequence is that of Latent membrane protein 1 (LMP1) from Homo sapiens (Human).